Reading from the N-terminus, the 556-residue chain is 2-isopropylmalate synthase (556 aa).

One can recognise a Pyruvate carboxyltransferase domain in the interval 33–307 (PIWCSSDLRD…HPQLDFSDID (275 aa)). Mg(2+) contacts are provided by Asp42, His246, His248, and Asn282. The tract at residues 439-556 (ATSPYVLASH…AVTQAEAKAA (118 aa)) is regulatory domain.

It belongs to the alpha-IPM synthase/homocitrate synthase family. LeuA type 2 subfamily. Homodimer. The cofactor is Mg(2+).

The protein localises to the cytoplasm. It catalyses the reaction 3-methyl-2-oxobutanoate + acetyl-CoA + H2O = (2S)-2-isopropylmalate + CoA + H(+). It functions in the pathway amino-acid biosynthesis; L-leucine biosynthesis; L-leucine from 3-methyl-2-oxobutanoate: step 1/4. Functionally, catalyzes the condensation of the acetyl group of acetyl-CoA with 3-methyl-2-oxobutanoate (2-ketoisovalerate) to form 3-carboxy-3-hydroxy-4-methylpentanoate (2-isopropylmalate). The chain is 2-isopropylmalate synthase from Pseudomonas aeruginosa (strain ATCC 15692 / DSM 22644 / CIP 104116 / JCM 14847 / LMG 12228 / 1C / PRS 101 / PAO1).